The following is a 453-amino-acid chain: MTYFPHTPQEIKEMLNTIGLESIEDLFSEIPEEIRQKAKENFKIPASPSEIDLLEEIKNIARKNIGKDYISFLGGGAYKHYIPPFVKLVSLFPTFYTAYTPYQPEISQGVLQSIFEYQSLICDLTGMEVANASLYEAGSGIAEAALMSVRITGKKEVIASSGLNPEYISVLKTYLQAQNIELKIIPLDEKGETDVDFLEKNISPKTSGVIIQNPNFFGVIETKLKDIEELIHKNNALFILSIYPISLGILKPPSEYNVDIVVGEGQSLGIPLGFGGPYLGILATKKEFIRQIPGRIVGETIDLEGERGFVNTLQTREQHIRRAKATSNICTNEALSAISAAVYMAILGKKGIKKIAEVCFSRAHYLRERMQKEVNLEITYPNSHFFNEFVIKIPENSENFLKKLEEKKILGGIPLSRFYKDRDKEILVAVTERNSLEELEYYIKSLKEVLKKN.

It belongs to the GcvP family. N-terminal subunit subfamily. In terms of assembly, the glycine cleavage system is composed of four proteins: P, T, L and H. In this organism, the P 'protein' is a heterodimer of two subunits.

The enzyme catalyses N(6)-[(R)-lipoyl]-L-lysyl-[glycine-cleavage complex H protein] + glycine + H(+) = N(6)-[(R)-S(8)-aminomethyldihydrolipoyl]-L-lysyl-[glycine-cleavage complex H protein] + CO2. In terms of biological role, the glycine cleavage system catalyzes the degradation of glycine. The P protein binds the alpha-amino group of glycine through its pyridoxal phosphate cofactor; CO(2) is released and the remaining methylamine moiety is then transferred to the lipoamide cofactor of the H protein. This Dictyoglomus thermophilum (strain ATCC 35947 / DSM 3960 / H-6-12) protein is Probable glycine dehydrogenase (decarboxylating) subunit 1.